We begin with the raw amino-acid sequence, 445 residues long: NAD-specific glutamate dehydrogenase (445 aa).

Residue Lys124 is part of the active site.

The protein belongs to the Glu/Leu/Phe/Val dehydrogenases family. In terms of assembly, homohexamer.

Its subcellular location is the cell surface. It carries out the reaction L-glutamate + NAD(+) + H2O = 2-oxoglutarate + NH4(+) + NADH + H(+). Probably involved in degradation rather than biosynthesis of glutamate. The sequence is that of NAD-specific glutamate dehydrogenase (gdh) from Porphyromonas gingivalis (strain ATCC 33277 / DSM 20709 / CIP 103683 / JCM 12257 / NCTC 11834 / 2561).